Consider the following 113-residue polypeptide: Antimicrobial peptide microplusin (113 aa).

The first 19 residues, 1 to 19 (MKSLLVLALLAFGAVLVSA), serve as a signal peptide directing secretion. Disulfide bonds link Cys-25–Cys-71, Cys-38–Cys-99, and Cys-60–Cys-65.

The protein resides in the secreted. Its function is as follows. Has bacteriostatic activity against Gram-positive bacteria, but not against Gram-negative bacteria. Has fungistatic activity against some but not all fungi. Binds and sequesters copper and iron ions. Copper-chelating activity is crucial for antimicrobial activity against M.luteus. In Argas monolakensis (Mono lake bird tick), this protein is Antimicrobial peptide microplusin.